We begin with the raw amino-acid sequence, 354 residues long: Uroporphyrinogen decarboxylase (354 aa).

Substrate is bound by residues 27–31, D77, Y154, T209, and H327; that span reads RQAGR.

Belongs to the uroporphyrinogen decarboxylase family. In terms of assembly, homodimer.

The protein resides in the cytoplasm. It catalyses the reaction uroporphyrinogen III + 4 H(+) = coproporphyrinogen III + 4 CO2. It participates in porphyrin-containing compound metabolism; protoporphyrin-IX biosynthesis; coproporphyrinogen-III from 5-aminolevulinate: step 4/4. Functionally, catalyzes the decarboxylation of four acetate groups of uroporphyrinogen-III to yield coproporphyrinogen-III. In Klebsiella pneumoniae (strain 342), this protein is Uroporphyrinogen decarboxylase.